Reading from the N-terminus, the 266-residue chain is MIEIKNVSKTYPNGTKGLKNIDLTIERGEFVVVVGLSGAGKSTLLRSINRLNEITDGEILIDGLSITKAKGKELRQIRQRTAMIFQSFNLVKRSSVLRNVLSGRVGYHGTLRTVLNLFPKQDVELALQALNRVNILEKAYSRASDLSGGQQQRVAIARALAQEPSVILADEPTASLDPLTTKQVMDDLKRINKEDKITTIVNLHFIDLAREYATRIIGLRAGEVVFDGPVSEATDEKFAEIYGRPIQEDELLGEELDEPASEHASQ.

In terms of domain architecture, ABC transporter spans 2-246 (IEIKNVSKTY…KFAEIYGRPI (245 aa)). 35 to 42 (GLSGAGKS) lines the ATP pocket.

This sequence belongs to the ABC transporter superfamily. Phosphonates importer (TC 3.A.1.9.1) family. The complex is composed of two ATP-binding proteins (PhnC), two transmembrane proteins (PhnE) and a solute-binding protein (PhnD).

Its subcellular location is the cell membrane. The catalysed reaction is phosphonate(out) + ATP + H2O = phosphonate(in) + ADP + phosphate + H(+). Its function is as follows. Part of the ABC transporter complex PhnCDE involved in phosphonates import. Responsible for energy coupling to the transport system. This chain is Phosphonates import ATP-binding protein PhnC, found in Shouchella clausii (strain KSM-K16) (Alkalihalobacillus clausii).